A 166-amino-acid chain; its full sequence is Endoribonuclease YbeY (166 aa).

3 residues coordinate Zn(2+): His-132, His-136, and His-142.

It belongs to the endoribonuclease YbeY family. Requires Zn(2+) as cofactor.

It is found in the cytoplasm. Its function is as follows. Single strand-specific metallo-endoribonuclease involved in late-stage 70S ribosome quality control and in maturation of the 3' terminus of the 16S rRNA. The polypeptide is Endoribonuclease YbeY (Clostridium botulinum (strain 657 / Type Ba4)).